A 463-amino-acid chain; its full sequence is MRVPNEVCFNILSYLEADELRCKSTVCTSWRNFIIPTLWEKVVFQNEAQLNNFFDTLQYSKDVSYYFRYLRKLNCSRVRKFLTDKHLMLMTLATGISRLNLSGCTRISEPLIGKLLYQNLNLVTINFSNIFSLPANILEYISDNCPNLKALNIGNCGLVEDTGMVQIIKRCPYLNRLIIPNCRKLTDVSLQILSEKEDLIELDISGCEGFHNADTLSRLVSRNRGLKELSMDGCTELSHFITFLNLNCELDAMRALSLNNLPDLKDSDIELITCKFSKLNSLFLSKCIGLTDSSLLSLTKLSQSLTTLHLGHCYEITDIGVQCLLKSCKNITYIDFGGCLRLSDIAVSAIAKLPYLQRVGLVKCICLTDLSVILLSGSFSRNLERVHLSYCIGLTAKSVSYLMYNCKTLKHLSVTGINSILCTELRSFSRPIPDGINPSQVPVFCAFTKVEIDLFREFIRNRI.

Residues 1 to 42 form the F-box domain; that stretch reads MRVPNEVCFNILSYLEADELRCKSTVCTSWRNFIIPTLWEKV. LRR repeat units lie at residues 145 to 170, 171 to 196, 198 to 220, 225 to 247, 249 to 271, 278 to 299, 304 to 326, 328 to 353, 354 to 378, and 380 to 405; these read CPNL…IIKR, CPYL…LSEK, DLIE…SRLV, GLKE…LNLN, ELDA…DIEL, KLNS…LSLT, SLTT…CLLK, CKNI…IAKL, PYLQ…LSGS, and SRNL…LMYN.

As to quaternary structure, part of a SCF E3 ubiquitin ligase complex. Interacts with skp1.

The protein localises to the mitochondrion. Functionally, involved in substrate recognition in ubiquitin-dependent degradation. This Schizosaccharomyces pombe (strain 972 / ATCC 24843) (Fission yeast) protein is SCF E3 ubiquitin ligase complex F-box protein pof2 (pof2).